Consider the following 474-residue polypeptide: Trehalose-6-phosphate synthase (474 aa).

Arginine 10 provides a ligand contact to D-glucose 6-phosphate. 22-23 contacts UDP-alpha-D-glucose; it reads GG. D-glucose 6-phosphate is bound by residues tyrosine 77 and aspartate 131. 2 residues coordinate UDP-alpha-D-glucose: arginine 263 and lysine 268. Residue arginine 301 coordinates D-glucose 6-phosphate. UDP-alpha-D-glucose is bound by residues phenylalanine 340 and 366-370; that span reads LVAKE.

It belongs to the glycosyltransferase 20 family. Homotetramer.

The catalysed reaction is D-glucose 6-phosphate + UDP-alpha-D-glucose = alpha,alpha-trehalose 6-phosphate + UDP + H(+). Its pathway is glycan biosynthesis; trehalose biosynthesis. Its function is as follows. Probably involved in the osmoprotection via the biosynthesis of trehalose. Catalyzes the transfer of glucose from UDP-alpha-D-glucose (UDP-Glc) to D-glucose 6-phosphate (Glc-6-P) to form trehalose-6-phosphate. Acts with retention of the anomeric configuration of the UDP-sugar donor. The protein is Trehalose-6-phosphate synthase of Enterobacter sp. (strain 638).